Here is a 239-residue protein sequence, read N- to C-terminus: Purine nucleoside phosphorylase DeoD-type (239 aa).

A purine D-ribonucleoside is bound at residue histidine 5. Residues glycine 21, arginine 25, arginine 44, and 88–91 (RVGS) each bind phosphate. Residues 180–182 (EME) and 204–205 (SD) each bind a purine D-ribonucleoside. Aspartate 205 acts as the Proton donor in catalysis.

Belongs to the PNP/UDP phosphorylase family. Homohexamer; trimer of homodimers.

The catalysed reaction is a purine D-ribonucleoside + phosphate = a purine nucleobase + alpha-D-ribose 1-phosphate. It catalyses the reaction a purine 2'-deoxy-D-ribonucleoside + phosphate = a purine nucleobase + 2-deoxy-alpha-D-ribose 1-phosphate. Its function is as follows. Catalyzes the reversible phosphorolytic breakdown of the N-glycosidic bond in the beta-(deoxy)ribonucleoside molecules, with the formation of the corresponding free purine bases and pentose-1-phosphate. This Salmonella arizonae (strain ATCC BAA-731 / CDC346-86 / RSK2980) protein is Purine nucleoside phosphorylase DeoD-type.